Reading from the N-terminus, the 346-residue chain is ASVTSPSIFPLSLRKADSGDPVVIACLIKGFFPLGFPEPVKVTWGKSGVVTNYLPSEAGGLYTVISQLSLRADQCPDDASVKCEVQHYTSPSKSVDVPCIVCPPPPPCPCECLLSTVPRLSLSPPAEDLLLSSNASLTCTLRGLRDPKGATFTWSPSSGNVPVLQEPKLEPSGCYSVSSVLPGCAEPWSKKETFSCTASHPELKKSQTVSITKPKEPLFQPQVHVLPPPSEELALNELVTLTCLVRGFSPKEVLVLWLQGHEKLPREKYLVFKPLREPGQSVPTFAVTSLLRVEAEAWLRGDVFSCMVGHEALPLSFTQKSIDRLSGKPTHVNVSVVMAEADGTCY.

3 Ig-like domains span residues 6-96 (PSIF…KSVD), 118-212 (PRLS…VSIT), and 221-323 (PQVH…KSID). Residues C26 and C83 are joined by a disulfide bond. N134 is a glycosylation site (N-linked (GlcNAc...) (complex) asparagine). 2 cysteine pairs are disulfide-bonded: C139-C196 and C243-C306. N-linked (GlcNAc...) (complex) asparagine glycosylation occurs at N333.

As to quaternary structure, immunoglobulins are composed of two identical heavy chains and two identical light chains; disulfide-linked. Monomeric or polymeric. Part of the secretory IgA (sIgA) complex that consists of two, four or five IgA monomers, and two additional non-Ig polypeptides, namely the JCHAIN and the secretory component (the proteolytic product of PIGR). Post-translationally, N-glycosylated. N-glycans attached to Asn-134 varies from differentially fucosylated complex and hybrid to sialylated with N-glycoyl neuraminic acid types: GlcNAc2Man3GlcNAc2(Fuc); GlcNAc1Man4GlcNAc2(Fuc); GlcNAc1Man4GlcNAc2; Gal1GlcNAc2Man3GlcNAc2(Fuc); GlcNAc2Man3GlcNAc2; Gal1GlcNAc2Man3GlcNAc2; GlcNAc1Man3GlcNAc2; GlcNAc1Man2GlcNAc2 and NeuGc1Gal1GlcNAc2Man3GlcNAc2(Fuc). N-glycans attached to Asn-333 are mainly fucosylated complex types: GlcNAc2Man3GlcNAc2; GlcNAc1Man3GlcNAc2; GlcNAc1Man3GlcNAc2(Fuc); GlcNAc2Man3GlcNAc2(Fuc); Gal1GlcNAc2Man3GlcNAc2(Fuc); NeuGc1Gal1GlcNAc1Man3GlcNAc2(Fuc); NeuGc1Gal1GlcNAc2Man3GlcNAc2(Fuc) and NeuAc1Gal1GlcNAc2Man3GlcNAc2(Fuc).

It is found in the secreted. It localises to the cell membrane. Constant region of immunoglobulin heavy chains. Immunoglobulins, also known as antibodies, are membrane-bound or secreted glycoproteins produced by B lymphocytes. In the recognition phase of humoral immunity, the membrane-bound immunoglobulins serve as receptors which, upon binding of a specific antigen, trigger the clonal expansion and differentiation of B lymphocytes into immunoglobulins-secreting plasma cells. Secreted immunoglobulins mediate the effector phase of humoral immunity, which results in the elimination of bound antigens. The antigen binding site is formed by the variable domain of one heavy chain, together with that of its associated light chain. Thus, each immunoglobulin has two antigen binding sites with remarkable affinity for a particular antigen. The variable domains are assembled by a process called V-(D)-J rearrangement and can then be subjected to somatic hypermutations which, after exposure to antigen and selection, allow affinity maturation for a particular antigen. Ig alpha is the major immunoglobulin class in body secretions. This chain is Immunoglobulin heavy constant alpha (IGHA), found in Equus asinus (Donkey).